A 213-amino-acid chain; its full sequence is Ribosome maturation factor RimM (213 aa).

The 77-residue stretch at 99-175 folds into the PRC barrel domain; the sequence is DQDAAYISDL…RITMRLPEGL (77 aa). A disordered region spans residues 182 to 213; sequence TATAREPRARRTRKRGLRKPITGADATPPDSQ. Residues 189–199 are compositionally biased toward basic residues; the sequence is RARRTRKRGLR.

The protein belongs to the RimM family. In terms of assembly, binds ribosomal protein uS19.

It localises to the cytoplasm. Functionally, an accessory protein needed during the final step in the assembly of 30S ribosomal subunit, possibly for assembly of the head region. Essential for efficient processing of 16S rRNA. May be needed both before and after RbfA during the maturation of 16S rRNA. It has affinity for free ribosomal 30S subunits but not for 70S ribosomes. The protein is Ribosome maturation factor RimM of Acidobacterium capsulatum (strain ATCC 51196 / DSM 11244 / BCRC 80197 / JCM 7670 / NBRC 15755 / NCIMB 13165 / 161).